Here is a 308-residue protein sequence, read N- to C-terminus: Glycine--tRNA ligase alpha subunit (308 aa).

Belongs to the class-II aminoacyl-tRNA synthetase family. Tetramer of two alpha and two beta subunits.

The protein localises to the cytoplasm. It catalyses the reaction tRNA(Gly) + glycine + ATP = glycyl-tRNA(Gly) + AMP + diphosphate. The polypeptide is Glycine--tRNA ligase alpha subunit (Brucella canis (strain ATCC 23365 / NCTC 10854 / RM-666)).